Here is a 112-residue protein sequence, read N- to C-terminus: UstYa family oxidase VicYb (112 aa).

2 short sequence motifs (HXXHC) span residues 9–13 and 36–40; these read HYLHC and HLDHC.

Belongs to the ustYa family.

The protein operates within mycotoxin biosynthesis. UstYa family oxidase, part of the gene cluster that mediates the biosynthesis of the secondary metabolite victorin, the molecular basis for Victoria blight of oats. Within the pathway, vicYb catalyzes the oxidative cyclization of the core peptide. The pathway starts with the processing of the precursor vicA1 by several endopeptidases including kexin proteases as well as the cluster-specific S28 family peptidases vicPa and vicPb to produce 7 identical copies of the hexapeptide Gly-Leu-Lys-Leu-Ala-Phe. After being excised from the precursor peptide, the core peptides are cyclized and modified post-translationally by enzymes encoded within the gene cluster. The ustYa family oxidase vicYb is required for the formation of the macrocycle in victorin and the copper amine oxidases (CAOs) vicK1 and vicK2 are responsible for converting victorin to the active form by oxidizing the N-terminal glycyl residue in the peptides to glyoxylate. Relaxed substrate specificity of enzymes in the victorin biosynthetic pathway results in a metabolic grid that produces a set of analogs including victorinines B, C, E or HV-toxin M. This chain is UstYa family oxidase VicYb, found in Bipolaris victoriae (strain FI3) (Victoria blight of oats agent).